Reading from the N-terminus, the 393-residue chain is Chalcone synthase LF2 (393 aa).

Cysteine 164 is an active-site residue.

This sequence belongs to the thiolase-like superfamily. Chalcone/stilbene synthases family.

The catalysed reaction is (E)-4-coumaroyl-CoA + 3 malonyl-CoA + 3 H(+) = 2',4,4',6'-tetrahydroxychalcone + 3 CO2 + 4 CoA. It functions in the pathway secondary metabolite biosynthesis; flavonoid biosynthesis. Functionally, the primary product of this enzyme is 4,2',4',6'-tetrahydroxychalcone (also termed naringenin-chalcone or chalcone) which can under specific conditions spontaneously isomerize into naringenin. In Ipomoea batatas (Sweet potato), this protein is Chalcone synthase LF2 (CHS-LF2).